A 132-amino-acid chain; its full sequence is Large ribosomal subunit protein uL14 (132 aa).

This sequence belongs to the universal ribosomal protein uL14 family. In terms of assembly, part of the 50S ribosomal subunit. Forms a cluster with proteins L3 and L24e, part of which may contact the 16S rRNA in 2 intersubunit bridges.

Its function is as follows. Binds to 23S rRNA. Forms part of two intersubunit bridges in the 70S ribosome. The polypeptide is Large ribosomal subunit protein uL14 (Methanococcus aeolicus (strain ATCC BAA-1280 / DSM 17508 / OCM 812 / Nankai-3)).